Reading from the N-terminus, the 471-residue chain is 3-isopropylmalate dehydratase large subunit (471 aa).

Residues C349, C410, and C413 each contribute to the [4Fe-4S] cluster site.

It belongs to the aconitase/IPM isomerase family. LeuC type 1 subfamily. Heterodimer of LeuC and LeuD. [4Fe-4S] cluster serves as cofactor.

It catalyses the reaction (2R,3S)-3-isopropylmalate = (2S)-2-isopropylmalate. It participates in amino-acid biosynthesis; L-leucine biosynthesis; L-leucine from 3-methyl-2-oxobutanoate: step 2/4. Its function is as follows. Catalyzes the isomerization between 2-isopropylmalate and 3-isopropylmalate, via the formation of 2-isopropylmaleate. This chain is 3-isopropylmalate dehydratase large subunit, found in Chromobacterium violaceum (strain ATCC 12472 / DSM 30191 / JCM 1249 / CCUG 213 / NBRC 12614 / NCIMB 9131 / NCTC 9757 / MK).